The chain runs to 368 residues: tRNA 2-selenouridine synthase (368 aa).

Residues 15–138 (FLNQHPIMDV…MRQYLIGVIE (124 aa)) form the Rhodanese domain. Catalysis depends on cysteine 98, which acts as the S-selanylcysteine intermediate.

This sequence belongs to the SelU family. As to quaternary structure, monomer.

It carries out the reaction 5-methylaminomethyl-2-thiouridine(34) in tRNA + selenophosphate + (2E)-geranyl diphosphate + H2O + H(+) = 5-methylaminomethyl-2-selenouridine(34) in tRNA + (2E)-thiogeraniol + phosphate + diphosphate. The enzyme catalyses 5-methylaminomethyl-2-thiouridine(34) in tRNA + (2E)-geranyl diphosphate = 5-methylaminomethyl-S-(2E)-geranyl-thiouridine(34) in tRNA + diphosphate. It catalyses the reaction 5-methylaminomethyl-S-(2E)-geranyl-thiouridine(34) in tRNA + selenophosphate + H(+) = 5-methylaminomethyl-2-(Se-phospho)selenouridine(34) in tRNA + (2E)-thiogeraniol. The catalysed reaction is 5-methylaminomethyl-2-(Se-phospho)selenouridine(34) in tRNA + H2O = 5-methylaminomethyl-2-selenouridine(34) in tRNA + phosphate. Functionally, involved in the post-transcriptional modification of the uridine at the wobble position (U34) of tRNA(Lys), tRNA(Glu) and tRNA(Gln). Catalyzes the conversion of 2-thiouridine (S2U-RNA) to 2-selenouridine (Se2U-RNA). Acts in a two-step process involving geranylation of 2-thiouridine (S2U) to S-geranyl-2-thiouridine (geS2U) and subsequent selenation of the latter derivative to 2-selenouridine (Se2U) in the tRNA chain. This is tRNA 2-selenouridine synthase from Shewanella baltica (strain OS185).